The primary structure comprises 238 residues: ATP-dependent dethiobiotin synthetase BioD (238 aa).

13–18 (DIGKTF) is an ATP binding site. Thr-17 lines the Mg(2+) pocket. Residue Lys-38 is part of the active site. Position 42 (Ser-42) interacts with substrate. ATP-binding positions include Asp-55, 116 to 119 (EGSG), 209 to 211 (PRI), and Asn-216. Mg(2+)-binding residues include Asp-55 and Glu-116.

It belongs to the dethiobiotin synthetase family. As to quaternary structure, homodimer. Mg(2+) serves as cofactor.

The protein resides in the cytoplasm. It catalyses the reaction (7R,8S)-7,8-diammoniononanoate + CO2 + ATP = (4R,5S)-dethiobiotin + ADP + phosphate + 3 H(+). It functions in the pathway cofactor biosynthesis; biotin biosynthesis; biotin from 7,8-diaminononanoate: step 1/2. Functionally, catalyzes a mechanistically unusual reaction, the ATP-dependent insertion of CO2 between the N7 and N8 nitrogen atoms of 7,8-diaminopelargonic acid (DAPA, also called 7,8-diammoniononanoate) to form a ureido ring. In Clostridium novyi (strain NT), this protein is ATP-dependent dethiobiotin synthetase BioD.